We begin with the raw amino-acid sequence, 392 residues long: Tyrosine--tRNA ligase (392 aa).

The 'HIGH' region motif lies at 39 to 48 (PTAPDIHIGH). A 'KMSKS' region motif is present at residues 223-227 (KMSKS). Lys226 serves as a coordination point for ATP. Residues 331–391 (IGIAQLLKQA…GKRRFARVVL (61 aa)) form the S4 RNA-binding domain.

The protein belongs to the class-I aminoacyl-tRNA synthetase family. TyrS type 2 subfamily. Homodimer.

The protein localises to the cytoplasm. The catalysed reaction is tRNA(Tyr) + L-tyrosine + ATP = L-tyrosyl-tRNA(Tyr) + AMP + diphosphate + H(+). In terms of biological role, catalyzes the attachment of tyrosine to tRNA(Tyr) in a two-step reaction: tyrosine is first activated by ATP to form Tyr-AMP and then transferred to the acceptor end of tRNA(Tyr). The sequence is that of Tyrosine--tRNA ligase from Ralstonia nicotianae (strain ATCC BAA-1114 / GMI1000) (Ralstonia solanacearum).